The primary structure comprises 315 residues: MKFVQLPDVQASNPDVMVGLTRVGVTEVKKMVEITRSDKRPIILIPTFDIFVDLPSYRKGANLSRNLEAIDRTLEEALNQPVYRIEDLCVDVAKRLLETHEYASNAEVRMHGEYMMKKKSPKTGLECQEVYDIYADAIVVRGGIIRKTIGAKVIAMTACPCAQEISKETAFKKLAALGVADNVIAEFLDDMPMPTHNQRGVGTIKIESGNDVKVSIEAIIDIIENSMSSQMYELLKREDERYVVHSAHKNPKFVEDCVRTMAKNLVRKFPSLPDDAVITIEQVNEESIHRHNAFAERMATFGELKKEMLSNGPVL.

Belongs to the GTP cyclohydrolase IV family. As to quaternary structure, homodimer. Fe(2+) is required as a cofactor.

It carries out the reaction GTP + H2O = 7,8-dihydroneopterin 2',3'-cyclic phosphate + formate + diphosphate + H(+). Its pathway is cofactor biosynthesis; 5,6,7,8-tetrahydromethanopterin biosynthesis. Its function is as follows. Converts GTP to 7,8-dihydro-D-neopterin 2',3'-cyclic phosphate, the first intermediate in the biosynthesis of coenzyme methanopterin. This Methanocella arvoryzae (strain DSM 22066 / NBRC 105507 / MRE50) protein is GTP cyclohydrolase MptA 1.